Consider the following 316-residue polypeptide: Very long chain fatty acid elongase 6 (316 aa).

Asparagine 11 is a glycosylation site (N-linked (GlcNAc...) asparagine). Helical transmembrane passes span 30–50 (WMLE…LVIF), 64–84 (LRGP…MGAA), 117–137 (FWTW…IFIV), 142–162 (PLIF…WFSY), 167–189 (SSAR…YYAL), and 202–222 (MIIT…NVWA). A glycan (N-linked (GlcNAc...) asparagine) is linked at asparagine 242. Residues 245 to 265 (IAMYSSYFVLFARFFYKAYLA) form a helical membrane-spanning segment.

This sequence belongs to the ELO family. ELOVL6 subfamily. As to expression, detected in the CNS (central nervous system) of third larval instar (at protein level). Expressed in cyst progenitor cells (at protein level). In the adult fly, expressed in several tissues including, sperm, follicular epithelium, nurse cells and cyst cells.

It is found in the mitochondrion outer membrane. Its subcellular location is the endoplasmic reticulum membrane. It carries out the reaction a very-long-chain acyl-CoA + malonyl-CoA + H(+) = a very-long-chain 3-oxoacyl-CoA + CO2 + CoA. The catalysed reaction is hexadecanoyl-CoA + malonyl-CoA + H(+) = 3-oxooctadecanoyl-CoA + CO2 + CoA. It participates in lipid metabolism; fatty acid biosynthesis. Its function is as follows. Catalyzes the first and rate-limiting reaction of the four reactions that constitute the long-chain fatty acids elongation cycle. This process allows the addition of 2 carbons to the chain of long- and very long-chain fatty acids (VLCFAs) per cycle. Condensing enzyme that elongates fatty acids with 12, 14 and 16 carbons with higher activity toward C16:0 acyl-CoAs. Catalyzes the synthesis of unsaturated C16 long chain fatty acids and, to a lesser extent, C18:0 and those with low desaturation degree. May participate in the production of saturated and monounsaturated VLCFAs of different chain lengths that are involved in multiple biological processes as precursors of membrane lipids and lipid mediators. This chain is Very long chain fatty acid elongase 6, found in Drosophila melanogaster (Fruit fly).